The sequence spans 134 residues: Large ribosomal subunit protein uL22 (134 aa).

Belongs to the universal ribosomal protein uL22 family. Part of the 50S ribosomal subunit.

Its function is as follows. This protein binds specifically to 23S rRNA; its binding is stimulated by other ribosomal proteins, e.g. L4, L17, and L20. It is important during the early stages of 50S assembly. It makes multiple contacts with different domains of the 23S rRNA in the assembled 50S subunit and ribosome. In terms of biological role, the globular domain of the protein is located near the polypeptide exit tunnel on the outside of the subunit, while an extended beta-hairpin is found that lines the wall of the exit tunnel in the center of the 70S ribosome. In Rhodococcus jostii (strain RHA1), this protein is Large ribosomal subunit protein uL22.